The primary structure comprises 501 residues: O-phosphoseryl-tRNA(Sec) selenium transferase (501 aa).

The interval 1–44 (MNRESFAAGERLVSPAYVRQGCEARRSHEHLIRLLLEKGKCPEN) is tetramerization. Ser-14 bears the Phosphoserine mark. Arg-75 is a binding site for pyridoxal 5'-phosphate. A phosphate loop (P-loop) region spans residues 96-106 (GRSGDISAVQP). Arg-97, Ser-98, and Gln-105 together coordinate substrate. Arg-271 lines the tRNA pocket. Lys-284 is modified (N6-(pyridoxal phosphate)lysine). Residue Arg-313 participates in substrate binding. The tRNA site is built by Arg-398 and Lys-463. Positions 474-493 (DKTEDVDIEEMALKLDNVLL) are SLA/LP epitope.

Belongs to the SepSecS family. In terms of assembly, homotetramer formed by a catalytic dimer and a non-catalytic dimer serving as a binding platform that orients tRNASec for catalysis. Each tetramer binds the CCA ends of two tRNAs which point to the active sites of the catalytic dimer. Pyridoxal 5'-phosphate serves as cofactor. As to expression, primarily expressed in liver, pancreas, kidney and lung. Overexpressed in PHA-stimulated T-cells.

The protein localises to the cytoplasm. It carries out the reaction O-phospho-L-seryl-tRNA(Sec) + selenophosphate + H2O = L-selenocysteinyl-tRNA(Sec) + 2 phosphate. It participates in aminoacyl-tRNA biosynthesis; selenocysteinyl-tRNA(Sec) biosynthesis; selenocysteinyl-tRNA(Sec) from L-seryl-tRNA(Sec) (archaeal/eukaryal route): step 2/2. Its function is as follows. Converts O-phosphoseryl-tRNA(Sec) to selenocysteinyl-tRNA(Sec) required for selenoprotein biosynthesis. This Homo sapiens (Human) protein is O-phosphoseryl-tRNA(Sec) selenium transferase (SEPSECS).